We begin with the raw amino-acid sequence, 976 residues long: 5'-3' exoribonuclease 2 homolog (976 aa).

The segment at 264-281 (RACELCGQYGHELKECRG) adopts a CCHC-type zinc-finger fold. Positions 411 to 420 (DEERFKENQK) are enriched in basic and acidic residues. Residues 411 to 442 (DEERFKENQKNKKARMQQYGRGRGGRGRGRGQ) form a disordered region. Residues 535–788 (DIRLYESGWK…GICVLYEDPE (254 aa)) are interaction with paxt-1. A disordered region spans residues 815 to 976 (WNERRDGRFN…GGYQGNSSWR (162 aa)). A compositionally biased stretch (low complexity) spans 856–866 (DRQGGNDNYRG).

Belongs to the 5'-3' exonuclease family. XRN2/RAT1 subfamily. In terms of assembly, interacts with paxt-1 (via N-terminus); the interaction is direct and results in stabilization of xrn-2 in the complex.

The protein resides in the nucleus. Its function is as follows. Possesses 5'-&gt;3' exoribonuclease activity. Plays a role in maintenance of steady-state concentration and turnover of microRNAs (miRNA) by degradation of mature miRNA. Degradation role is enhanced when in complex with paxt-1. Partially redundant to xrn-1 in miRNA guide strand degradation. Implicated in differential regulation of mRNAs such as let-7 by controlling the accumulation of mature miRNA. Positively regulates molting of the pharyngeal cuticle. This Caenorhabditis briggsae protein is 5'-3' exoribonuclease 2 homolog.